Here is a 255-residue protein sequence, read N- to C-terminus: Ribonuclease HII (255 aa).

The RNase H type-2 domain maps to Glu70–Lys255. The a divalent metal cation site is built by Asp76, Glu77, and Asp168.

Belongs to the RNase HII family. Mn(2+) serves as cofactor. Requires Mg(2+) as cofactor.

The protein resides in the cytoplasm. The enzyme catalyses Endonucleolytic cleavage to 5'-phosphomonoester.. Its function is as follows. Endonuclease that specifically degrades the RNA of RNA-DNA hybrids. This chain is Ribonuclease HII, found in Streptococcus thermophilus (strain ATCC BAA-491 / LMD-9).